The chain runs to 482 residues: Cilia- and flagella-associated protein 53 (482 aa).

Coiled-coil stretches lie at residues 9–40 (DARI…AVAE), 67–124 (ADLN…QALA), and 152–413 (IEER…AKDA). Residues 462–482 (VNQTLSSTDPPVWHGRRKFDW) form a disordered region.

Belongs to the CFAP53 family.

Its subcellular location is the cell projection. It localises to the cilium. The protein resides in the flagellum. In terms of biological role, may play a role in filopodium movement. The protein is Cilia- and flagella-associated protein 53 of Chlamydomonas reinhardtii (Chlamydomonas smithii).